Here is a 133-residue protein sequence, read N- to C-terminus: Fluoride-specific ion channel FluC (133 aa).

The next 4 membrane-spanning stretches (helical) occupy residues 4–24, 35–55, 66–86, and 107–127; these read LLWI…LSVL, WGTL…WVLA, VFIF…SLES, and VLGL…LGGP. The Na(+) site is built by G74 and T77.

Belongs to the fluoride channel Fluc/FEX (TC 1.A.43) family.

It is found in the cell inner membrane. It carries out the reaction fluoride(in) = fluoride(out). Na(+) is not transported, but it plays an essential structural role and its presence is essential for fluoride channel function. Fluoride-specific ion channel. Important for reducing fluoride concentration in the cell, thus reducing its toxicity. The protein is Fluoride-specific ion channel FluC of Salinibacter ruber (strain DSM 13855 / M31).